We begin with the raw amino-acid sequence, 216 residues long: Soluble inorganic pyrophosphatase 4 (216 aa).

The residue at position 18 (Ser-18) is a Phosphoserine. Substrate-binding residues include Lys-66 and Arg-80. The active-site Proton donor is Tyr-88. Tyr-92 is a binding site for substrate. Residues Asp-102, Asp-107, and Asp-139 each coordinate Mg(2+). Tyr-176 serves as a coordination point for substrate.

The protein belongs to the PPase family. As to quaternary structure, monomer. The cofactor is Mg(2+). In terms of tissue distribution, ubiquitous, excepted in pollen. Very low expression in cork, xylem and hypocotyls.

The protein resides in the cytoplasm. The enzyme catalyses diphosphate + H2O = 2 phosphate + H(+). Inhibited by Zn(2+), Ca(2+), Ba(2+), Fe(2+), Co(2+), Cu(2+), Eu(2+), Eu(3+) and Mn(2+). Functionally, catalyzes the irreversible hydrolysis of pyrophosphate (PPi) to phosphate. The MgPPi(2-) complex binds to the enzyme only after a free Mg(2+) ion has bound. No activity with glycerol-3-phosphate, glucose-6-phosphate, p-nitrophenylphosphate, ADP, NADP(+), NAD(+),NADH, NADPH or phosphoribosyl pyrophosphate as substrates. In Arabidopsis thaliana (Mouse-ear cress), this protein is Soluble inorganic pyrophosphatase 4.